We begin with the raw amino-acid sequence, 211 residues long: Large ribosomal subunit protein uL3 (211 aa).

Positions 130-139 (QDATHGNSLS) are enriched in polar residues. Residues 130-151 (QDATHGNSLSHRAPGSIGQNQT) form a disordered region. Position 150 is an N5-methylglutamine (glutamine 150).

The protein belongs to the universal ribosomal protein uL3 family. As to quaternary structure, part of the 50S ribosomal subunit. Forms a cluster with proteins L14 and L19. Post-translationally, methylated by PrmB.

In terms of biological role, one of the primary rRNA binding proteins, it binds directly near the 3'-end of the 23S rRNA, where it nucleates assembly of the 50S subunit. The chain is Large ribosomal subunit protein uL3 from Alcanivorax borkumensis (strain ATCC 700651 / DSM 11573 / NCIMB 13689 / SK2).